A 260-amino-acid polypeptide reads, in one-letter code: ATP synthase subunit a (260 aa).

The next 6 helical transmembrane spans lie at 37–57 (FTNA…FMTL), 95–115 (FFPF…IGMF), 125–145 (IVVT…TGFV), 154–174 (VFVP…IEII), 191–211 (MLAG…FMTM), and 233–253 (EFLV…MYLH).

This sequence belongs to the ATPase A chain family. As to quaternary structure, F-type ATPases have 2 components, CF(1) - the catalytic core - and CF(0) - the membrane proton channel. CF(1) has five subunits: alpha(3), beta(3), gamma(1), delta(1), epsilon(1). CF(0) has three main subunits: a(1), b(2) and c(9-12). The alpha and beta chains form an alternating ring which encloses part of the gamma chain. CF(1) is attached to CF(0) by a central stalk formed by the gamma and epsilon chains, while a peripheral stalk is formed by the delta and b chains.

The protein localises to the cell inner membrane. In terms of biological role, key component of the proton channel; it plays a direct role in the translocation of protons across the membrane. In Parvibaculum lavamentivorans (strain DS-1 / DSM 13023 / NCIMB 13966), this protein is ATP synthase subunit a.